Consider the following 373-residue polypeptide: Chaperone protein DnaJ (373 aa).

The J domain maps to 5–70 (DFYATLGVAR…EKRAMYDQYG (66 aa)). The CR-type zinc-finger motif lies at 134–212 (GVKKRINIPT…CRGVGRNKAV (79 aa)). Positions 147, 150, 164, 167, 186, 189, 200, and 203 each coordinate Zn(2+). CXXCXGXG motif repeat units lie at residues 147-154 (CDVCNGSG), 164-171 (CPTCKGSG), 186-193 (CPTCRGAG), and 200-207 (CVKCRGVG).

Belongs to the DnaJ family. In terms of assembly, homodimer. It depends on Zn(2+) as a cofactor.

Its subcellular location is the cytoplasm. Its function is as follows. Participates actively in the response to hyperosmotic and heat shock by preventing the aggregation of stress-denatured proteins and by disaggregating proteins, also in an autonomous, DnaK-independent fashion. Unfolded proteins bind initially to DnaJ; upon interaction with the DnaJ-bound protein, DnaK hydrolyzes its bound ATP, resulting in the formation of a stable complex. GrpE releases ADP from DnaK; ATP binding to DnaK triggers the release of the substrate protein, thus completing the reaction cycle. Several rounds of ATP-dependent interactions between DnaJ, DnaK and GrpE are required for fully efficient folding. Also involved, together with DnaK and GrpE, in the DNA replication of plasmids through activation of initiation proteins. This Neisseria gonorrhoeae (strain ATCC 700825 / FA 1090) protein is Chaperone protein DnaJ.